The sequence spans 181 residues: CDP-archaeol synthase (181 aa).

The next 5 membrane-spanning stretches (helical) occupy residues 7–27 (VVVA…AVLA), 55–75 (AVGT…RPAA), 80–100 (GVVL…GAMV), 128–148 (FVVV…GDTF), and 150–170 (LPVL…TNGI).

It belongs to the CDP-archaeol synthase family. Requires Mg(2+) as cofactor.

It is found in the cell membrane. It carries out the reaction 2,3-bis-O-(geranylgeranyl)-sn-glycerol 1-phosphate + CTP + H(+) = CDP-2,3-bis-O-(geranylgeranyl)-sn-glycerol + diphosphate. It functions in the pathway membrane lipid metabolism; glycerophospholipid metabolism. Catalyzes the formation of CDP-2,3-bis-(O-geranylgeranyl)-sn-glycerol (CDP-archaeol) from 2,3-bis-(O-geranylgeranyl)-sn-glycerol 1-phosphate (DGGGP) and CTP. This reaction is the third ether-bond-formation step in the biosynthesis of archaeal membrane lipids. The sequence is that of CDP-archaeol synthase from Halobacterium salinarum (strain ATCC 29341 / DSM 671 / R1).